A 326-amino-acid chain; its full sequence is Flotillin-like protein FloA (326 aa).

A run of 2 helical transmembrane segments spans residues 6–26 (IILF…GSSV) and 27–47 (SLWI…IVFM).

The protein belongs to the flotillin-like FloA family. Homooligomerizes.

The protein localises to the cell membrane. The protein resides in the membrane raft. Its function is as follows. Found in functional membrane microdomains (FMM) that may be equivalent to eukaryotic membrane rafts. FMMs are highly dynamic and increase in number as cells age. Flotillins are thought to be important factors in membrane fluidity. This Desulfosudis oleivorans (strain DSM 6200 / JCM 39069 / Hxd3) (Desulfococcus oleovorans) protein is Flotillin-like protein FloA.